Here is a 252-residue protein sequence, read N- to C-terminus: Triosephosphate isomerase (252 aa).

10 to 12 (NWK) is a substrate binding site. His-96 serves as the catalytic Electrophile. Glu-168 (proton acceptor) is an active-site residue. Substrate contacts are provided by residues Gly-174, Ser-214, and 235–236 (GG).

It belongs to the triosephosphate isomerase family. Homodimer.

It is found in the cytoplasm. The catalysed reaction is D-glyceraldehyde 3-phosphate = dihydroxyacetone phosphate. The protein operates within carbohydrate biosynthesis; gluconeogenesis. It functions in the pathway carbohydrate degradation; glycolysis; D-glyceraldehyde 3-phosphate from glycerone phosphate: step 1/1. Involved in the gluconeogenesis. Catalyzes stereospecifically the conversion of dihydroxyacetone phosphate (DHAP) to D-glyceraldehyde-3-phosphate (G3P). This Streptococcus gordonii (strain Challis / ATCC 35105 / BCRC 15272 / CH1 / DL1 / V288) protein is Triosephosphate isomerase.